Here is a 424-residue protein sequence, read N- to C-terminus: Virion nicking-joining enzyme (424 aa).

2 consecutive PLD phosphodiesterase domains span residues leucine 110 to serine 137 and tyrosine 320 to tyrosine 346.

The protein belongs to the orthopoxvirus OPG042 family.

It is found in the virion. DNA nicking enzyme that cleaves extruded cruciform DNA at its tip. Probably nicks viral hairpins. This is Virion nicking-joining enzyme (OPG042) from Vaccinia virus (strain Western Reserve) (VACV).